Here is a 275-residue protein sequence, read N- to C-terminus: Large ribosomal subunit protein uL2 (275 aa).

Disordered stretches follow at residues 28–49 and 224–246; these read APHA…HGRI and AMNP…NPHP.

Belongs to the universal ribosomal protein uL2 family. Part of the 50S ribosomal subunit. Forms a bridge to the 30S subunit in the 70S ribosome.

Its function is as follows. One of the primary rRNA binding proteins. Required for association of the 30S and 50S subunits to form the 70S ribosome, for tRNA binding and peptide bond formation. It has been suggested to have peptidyltransferase activity; this is somewhat controversial. Makes several contacts with the 16S rRNA in the 70S ribosome. The sequence is that of Large ribosomal subunit protein uL2 from Stenotrophomonas maltophilia (strain R551-3).